The chain runs to 173 residues: Crossover junction endodeoxyribonuclease RuvC (173 aa).

Active-site residues include aspartate 8, glutamate 67, and aspartate 139. Residues aspartate 8, glutamate 67, and aspartate 139 each contribute to the Mg(2+) site.

It belongs to the RuvC family. In terms of assembly, homodimer which binds Holliday junction (HJ) DNA. The HJ becomes 2-fold symmetrical on binding to RuvC with unstacked arms; it has a different conformation from HJ DNA in complex with RuvA. In the full resolvosome a probable DNA-RuvA(4)-RuvB(12)-RuvC(2) complex forms which resolves the HJ. It depends on Mg(2+) as a cofactor.

It localises to the cytoplasm. It carries out the reaction Endonucleolytic cleavage at a junction such as a reciprocal single-stranded crossover between two homologous DNA duplexes (Holliday junction).. Functionally, the RuvA-RuvB-RuvC complex processes Holliday junction (HJ) DNA during genetic recombination and DNA repair. Endonuclease that resolves HJ intermediates. Cleaves cruciform DNA by making single-stranded nicks across the HJ at symmetrical positions within the homologous arms, yielding a 5'-phosphate and a 3'-hydroxyl group; requires a central core of homology in the junction. The consensus cleavage sequence is 5'-(A/T)TT(C/G)-3'. Cleavage occurs on the 3'-side of the TT dinucleotide at the point of strand exchange. HJ branch migration catalyzed by RuvA-RuvB allows RuvC to scan DNA until it finds its consensus sequence, where it cleaves and resolves the cruciform DNA. The sequence is that of Crossover junction endodeoxyribonuclease RuvC from Sodalis glossinidius (strain morsitans).